Here is a 268-residue protein sequence, read N- to C-terminus: Probable ribosomal RNA small subunit methyltransferase A (268 aa).

S-adenosyl-L-methionine is bound by residues histidine 23, leucine 25, glycine 50, glutamate 71, aspartate 95, and asparagine 110.

It belongs to the class I-like SAM-binding methyltransferase superfamily. rRNA adenine N(6)-methyltransferase family. RsmA subfamily.

It localises to the cytoplasm. Its function is as follows. Specifically dimethylates two adjacent adenosines in the loop of a conserved hairpin near the 3'-end of 16S rRNA in the 30S particle. May play a critical role in biogenesis of 30S subunits. The chain is Probable ribosomal RNA small subunit methyltransferase A from Pyrococcus horikoshii (strain ATCC 700860 / DSM 12428 / JCM 9974 / NBRC 100139 / OT-3).